A 396-amino-acid polypeptide reads, in one-letter code: L-lactate dehydrogenase (396 aa).

One can recognise an FMN hydroxy acid dehydrogenase domain in the interval Met-1–Gly-380. Position 24 (Tyr-24) interacts with substrate. FMN-binding residues include Ser-106 and Gln-127. Tyr-129 is a substrate binding site. Thr-155 serves as a coordination point for FMN. Arg-164 is a substrate binding site. Residue Lys-251 participates in FMN binding. The active-site Proton acceptor is His-275. Arg-278 is a binding site for substrate. Asp-306–Arg-330 serves as a coordination point for FMN.

The protein belongs to the FMN-dependent alpha-hydroxy acid dehydrogenase family. FMN is required as a cofactor.

It localises to the cell inner membrane. The enzyme catalyses (S)-lactate + A = pyruvate + AH2. Its function is as follows. Catalyzes the conversion of L-lactate to pyruvate. Is coupled to the respiratory chain. This chain is L-lactate dehydrogenase, found in Shigella dysenteriae serotype 1 (strain Sd197).